The sequence spans 338 residues: Tryptophan--tRNA ligase (338 aa).

Residues 11–13 and 19–20 contribute to the ATP site; these read QPS and GN. The 'HIGH' region signature appears at 12 to 20; that stretch reads PSGELSIGN. An L-tryptophan-binding site is contributed by Asp135. ATP contacts are provided by residues 147 to 149, Val189, and 198 to 202; these read GSD and KMSKS. The 'KMSKS' region motif lies at 198–202; the sequence is KMSKS.

Belongs to the class-I aminoacyl-tRNA synthetase family. In terms of assembly, homodimer.

Its subcellular location is the cytoplasm. The enzyme catalyses tRNA(Trp) + L-tryptophan + ATP = L-tryptophyl-tRNA(Trp) + AMP + diphosphate + H(+). Catalyzes the attachment of tryptophan to tRNA(Trp). This is Tryptophan--tRNA ligase from Aliivibrio fischeri (strain ATCC 700601 / ES114) (Vibrio fischeri).